Reading from the N-terminus, the 324-residue chain is Beta-ketoacyl-[acyl-carrier-protein] synthase III (324 aa).

Catalysis depends on residues Cys114 and His251. Positions 252–256 (QANRR) are ACP-binding. Residue Asn281 is part of the active site.

Belongs to the thiolase-like superfamily. FabH family. As to quaternary structure, homodimer.

The protein localises to the cytoplasm. It carries out the reaction malonyl-[ACP] + acetyl-CoA + H(+) = 3-oxobutanoyl-[ACP] + CO2 + CoA. The protein operates within lipid metabolism; fatty acid biosynthesis. Functionally, catalyzes the condensation reaction of fatty acid synthesis by the addition to an acyl acceptor of two carbons from malonyl-ACP. Catalyzes the first condensation reaction which initiates fatty acid synthesis and may therefore play a role in governing the total rate of fatty acid production. Possesses both acetoacetyl-ACP synthase and acetyl transacylase activities. Its substrate specificity determines the biosynthesis of branched-chain and/or straight-chain of fatty acids. This Paramagnetospirillum magneticum (strain ATCC 700264 / AMB-1) (Magnetospirillum magneticum) protein is Beta-ketoacyl-[acyl-carrier-protein] synthase III.